The chain runs to 590 residues: MATQHIENKLKLLPDLPGCYMMKDINSRIIYVGKAKNLKNRVRSYFKSSHEGKTAKLVSEIRNFETIITSTDKEAFLLEITLIQKHKPYYNIKLKRGTGYPYIKITHEKDPQLKIVSQVKKDGGYYFGPYPNVYAATETLQLLQKVYPLRRCNGYQKRPCLYYHMGQCLGACFKEVPQSEYEKQIKKIKSFLNGNVSKIKKELEQKMETASENLEFERAAEIRDQIHYVEMTVEKQKIISNDNTPRDLFAFYMNKGWLSLQIFSIRQARLMKREKRLFPCIDTPEAELESFILQFYNQKNRILPKEILVPSGMDKETLSEILGIPVKTPQRGQKRDLLEMAQKNARLVLEEKFRLLELDERKTTGAMNEITDALGLPNGHRIEAFDHSHLQGEDLVSAMVCFIDGKPEKTEYRKYKLKNVDHADEAASTREVIYRRYSRLLKEKANLPDLILMDGASIQINAAVDVLHNQLGIDIPVAGMVKNDRHKTADLMTENDEKIGLDPKSEGFYLLQRIQDEVHRFAITFHRQVRSKNSLASRLERIQGVGPKTRIKLLRNYGSLKNISAASVEDLESLGISKKVAQTIKLSLKN.

The 78-residue stretch at 15–92 folds into the GIY-YIG domain; the sequence is DLPGCYMMKD…IQKHKPYYNI (78 aa). Residues 197 to 232 form the UVR domain; it reads SKIKKELEQKMETASENLEFERAAEIRDQIHYVEMT.

It belongs to the UvrC family. In terms of assembly, interacts with UvrB in an incision complex.

It localises to the cytoplasm. Functionally, the UvrABC repair system catalyzes the recognition and processing of DNA lesions. UvrC both incises the 5' and 3' sides of the lesion. The N-terminal half is responsible for the 3' incision and the C-terminal half is responsible for the 5' incision. The protein is UvrABC system protein C of Ligilactobacillus salivarius (strain UCC118) (Lactobacillus salivarius).